A 655-amino-acid chain; its full sequence is Fructose-1,6-bisphosphatase class 3 (655 aa).

It belongs to the FBPase class 3 family. Mn(2+) serves as cofactor.

It catalyses the reaction beta-D-fructose 1,6-bisphosphate + H2O = beta-D-fructose 6-phosphate + phosphate. Its pathway is carbohydrate biosynthesis; gluconeogenesis. The polypeptide is Fructose-1,6-bisphosphatase class 3 (Porphyromonas gingivalis (strain ATCC BAA-308 / W83)).